The sequence spans 457 residues: Glutamate--tRNA ligase 2 (457 aa).

The 'HIGH' region signature appears at 9–19 (PSPTGRIHIGN). The short motif at 250–254 (GLSKR) is the 'KMSKS' region element. Lys253 lines the ATP pocket.

This sequence belongs to the class-I aminoacyl-tRNA synthetase family. Glutamate--tRNA ligase type 1 subfamily. As to quaternary structure, monomer.

It localises to the cytoplasm. The enzyme catalyses tRNA(Glu) + L-glutamate + ATP = L-glutamyl-tRNA(Glu) + AMP + diphosphate. In terms of biological role, catalyzes the attachment of glutamate to tRNA(Glu) in a two-step reaction: glutamate is first activated by ATP to form Glu-AMP and then transferred to the acceptor end of tRNA(Glu). The polypeptide is Glutamate--tRNA ligase 2 (Mesorhizobium japonicum (strain LMG 29417 / CECT 9101 / MAFF 303099) (Mesorhizobium loti (strain MAFF 303099))).